The following is a 441-amino-acid chain: Cysteine--tRNA ligase (441 aa).

Residue Cys24 coordinates Zn(2+). The 'HIGH' region signature appears at 26–36; sequence PTVYNYIHIGN. The Zn(2+) site is built by Cys204, His230, and Glu234. The short motif at 262–266 is the 'KMSKS' region element; it reads KMSKS. Residue Lys265 coordinates ATP.

The protein belongs to the class-I aminoacyl-tRNA synthetase family. As to quaternary structure, monomer. Zn(2+) is required as a cofactor.

The protein resides in the cytoplasm. The enzyme catalyses tRNA(Cys) + L-cysteine + ATP = L-cysteinyl-tRNA(Cys) + AMP + diphosphate. This is Cysteine--tRNA ligase from Mycoplasma capricolum subsp. capricolum (strain California kid / ATCC 27343 / NCTC 10154).